A 575-amino-acid chain; its full sequence is Hemagglutinin-neuraminidase (575 aa).

Residues 1–10 (MDGDRGKRDS) are compositionally biased toward basic and acidic residues. The disordered stretch occupies residues 1 to 24 (MDGDRGKRDSYWSTSPSGSTTKLA). The Intravirion portion of the chain corresponds to 1 to 37 (MDGDRGKRDSYWSTSPSGSTTKLASGWERSSKVDTWL). Residues 10–14 (SYWST) are incorporation in virion. Residues 11–23 (YWSTSPSGSTTKL) show a composition bias toward polar residues. The helical transmembrane segment at 38–58 (LILSFTQWALSIATVIICIII) threads the bilayer. The tract at residues 59-140 (SARQGYSMKE…RQELTQLCES (82 aa)) is involved in interaction with F protein. Residues 59–575 (SARQGYSMKE…SIPKLCKAES (517 aa)) lie on the Virion surface side of the membrane. N77 carries N-linked (GlcNAc...) asparagine; by host glycosylation. Disulfide bonds link C192-C216, C258-C271, C357-C469, and C463-C473. Positions 254–259 (NRKSCS) are involved in neuraminidase activity. 2 N-linked (GlcNAc...) asparagine; by host glycosylation sites follow: N499 and N511. C535 and C544 are disulfide-bonded.

Belongs to the paramyxoviruses hemagglutinin-neuraminidase family. As to quaternary structure, homotetramer; composed of disulfide-linked homodimers. Interacts with F protein trimer. N-glycosylated; glycans consist of a mixture of high mannose-type oligosaccharides and of complex-type oligosaccharides.

It localises to the virion membrane. The protein resides in the host cell membrane. The enzyme catalyses Hydrolysis of alpha-(2-&gt;3)-, alpha-(2-&gt;6)-, alpha-(2-&gt;8)- glycosidic linkages of terminal sialic acid residues in oligosaccharides, glycoproteins, glycolipids, colominic acid and synthetic substrates.. Its function is as follows. Attaches the virus to sialic acid-containing cell receptors and thereby initiating infection. Binding of HN protein to the receptor induces a conformational change that allows the F protein to trigger virion/cell membranes fusion. Functionally, neuraminidase activity ensures the efficient spread of the virus by dissociating the mature virions from the neuraminic acid containing glycoproteins. In Sendai virus (strain Fushimi) (SeV), this protein is Hemagglutinin-neuraminidase (HN).